A 75-amino-acid polypeptide reads, in one-letter code: Supwaprin-a (75 aa).

The first 24 residues, 1 to 24 (MSSGGLLLLLGFLTLWAELTPVSG), serve as a signal peptide directing secretion. Positions 27 to 72 (RPKKPGLCPPRPQKPPCVRECKNDWSCPGEQKCCRYGCIFECRDPI) constitute a WAP domain. Disulfide bonds link Cys34–Cys60, Cys43–Cys64, Cys47–Cys59, and Cys53–Cys68.

It belongs to the venom waprin family. As to expression, expressed by the venom gland.

It is found in the secreted. Its function is as follows. Damages membranes of susceptible bacteria. Has no hemolytic activity. Not toxic to mice. Does not inhibit the proteinases elastase and cathepsin G. The protein is Supwaprin-a of Austrelaps superbus (Lowland copperhead snake).